A 293-amino-acid polypeptide reads, in one-letter code: Nucleotide-binding protein BA_5384/GBAA_5384/BAS5004 (293 aa).

Position 14-21 (14-21 (GMSGAGKT)) interacts with ATP. GTP is bound at residue 65–68 (DLRG).

It belongs to the RapZ-like family.

Its function is as follows. Displays ATPase and GTPase activities. The protein is Nucleotide-binding protein BA_5384/GBAA_5384/BAS5004 of Bacillus anthracis.